Reading from the N-terminus, the 381-residue chain is MPFGNTHNKFKLNYKPQEEYPDLSKHNNHMAKVLTPDLYNKLRDKETPSGFTLDDVIQTGVDNPGHPFIMTVGCVAGDEESYTVFKDLFDPIIQDRHGGYKPTDKHKTDLNHENLKGGDDLDPNYVLSSRVRTGRSIKGYTLPPHCSRGERRAVEKLSVEALNSLTGEFKGKYYPLKSMTEQEQQQLIDDHFLFDKPVSPLLLASGMARDWPDARGIWHNDNKSFLVWVNEEDHLRVISMEKGGNMKEVFRRFCVGLQKIEEIFKKAGHPFMWNEHLGYVLTCPSNLGTGLRGGVHVKLANLSKHPKFEEILTRLRLQKRGTGGVDTAAVGAVFDISNADRLGSSEVEQVQLVVDGVKLMVEMEKKLEKGQSIDDMIPAQK.

In terms of domain architecture, Phosphagen kinase N-terminal spans Lys-11 to Gly-98. Residues Tyr-125–Leu-367 enclose the Phosphagen kinase C-terminal domain. ATP is bound at residue Ser-128 to Arg-132. The residue at position 164 (Ser-164) is a Phosphoserine. Thr-166 is modified (phosphothreonine). A Phosphoserine modification is found at Ser-178. Thr-180 carries the phosphothreonine modification. His-191 lines the ATP pocket. Ser-199 carries the post-translational modification Phosphoserine. ATP is bound by residues Arg-236 and Arg-292. A phosphothreonine mark is found at Thr-313 and Thr-322. ATP is bound by residues Arg-320–Val-325 and Asp-335. Phosphoserine is present on Ser-372.

It belongs to the ATP:guanido phosphotransferase family. As to quaternary structure, dimer of identical or non-identical chains, which can be either B (brain type) or M (muscle type). With MM being the major form in skeletal muscle and myocardium, MB existing in myocardium, and BB existing in many tissues, especially brain.

It is found in the cytoplasm. It catalyses the reaction creatine + ATP = N-phosphocreatine + ADP + H(+). Functionally, reversibly catalyzes the transfer of phosphate between ATP and various phosphogens (e.g. creatine phosphate). Creatine kinase isoenzymes play a central role in energy transduction in tissues with large, fluctuating energy demands, such as skeletal muscle, heart, brain and spermatozoa. This Mus musculus (Mouse) protein is Creatine kinase M-type (Ckm).